A 392-amino-acid chain; its full sequence is Zinc finger protein CONSTANS-LIKE 7 (392 aa).

Zn(2+) contacts are provided by Cys22, Cys25, Cys46, and His51. A B box-type; atypical zinc finger spans residues 22–65 (CDACMKRSRASWYCPADDAFLCQSCDASIHSANHLAKRHERVRL). Positions 226–254 (KEENKVGFEINCKDLKRVKDEDEEEEEAK) form a coiled coil. Disordered stretches follow at residues 246–271 (EDEE…SNDK) and 326–346 (SDGS…GERE). Residues 259–271 (GSKDSDREASNDK) are compositionally biased toward basic and acidic residues. The region spanning 345 to 387 (REARVLRYKEKRRTRLFSKKIRYEVRKLNAEQRPRIKGRFVKR) is the CCT domain.

The protein belongs to the CONSTANS family.

It is found in the nucleus. This chain is Zinc finger protein CONSTANS-LIKE 7 (COL7), found in Arabidopsis thaliana (Mouse-ear cress).